The sequence spans 227 residues: UPF0758 protein Rxyl_1530 (227 aa).

The MPN domain occupies 106–227 (VISSPADVDG…YFSMKEHGML (122 aa)). The Zn(2+) site is built by His-177, His-179, and Asp-190. The short motif at 177–190 (HNHPSGRVEPSRED) is the JAMM motif element.

Belongs to the UPF0758 family.

The polypeptide is UPF0758 protein Rxyl_1530 (Rubrobacter xylanophilus (strain DSM 9941 / JCM 11954 / NBRC 16129 / PRD-1)).